Here is a 429-residue protein sequence, read N- to C-terminus: Glutamate-1-semialdehyde 2,1-aminomutase (429 aa).

Lysine 265 carries the N6-(pyridoxal phosphate)lysine modification.

It belongs to the class-III pyridoxal-phosphate-dependent aminotransferase family. HemL subfamily. In terms of assembly, homodimer. Pyridoxal 5'-phosphate serves as cofactor.

Its subcellular location is the cytoplasm. It carries out the reaction (S)-4-amino-5-oxopentanoate = 5-aminolevulinate. It functions in the pathway porphyrin-containing compound metabolism; protoporphyrin-IX biosynthesis; 5-aminolevulinate from L-glutamyl-tRNA(Glu): step 2/2. The chain is Glutamate-1-semialdehyde 2,1-aminomutase from Legionella pneumophila (strain Lens).